A 132-amino-acid chain; its full sequence is Small ribosomal subunit protein uS8 (132 aa).

The protein belongs to the universal ribosomal protein uS8 family. As to quaternary structure, part of the 30S ribosomal subunit. Contacts proteins S5 and S12.

One of the primary rRNA binding proteins, it binds directly to 16S rRNA central domain where it helps coordinate assembly of the platform of the 30S subunit. The chain is Small ribosomal subunit protein uS8 from Rickettsia rickettsii (strain Sheila Smith).